The following is a 791-amino-acid chain: Putative DNA (cytosine-5)-methyltransferase CMT1 (791 aa).

Residues Tyr37–Glu59 form a disordered region. The 121-residue stretch at Val79 to Asp199 folds into the BAH domain. An SAM-dependent MTase C5-type domain is found at Lys225–Leu768. The stretch at Val308–Glu333 forms a coiled coil. Positions Phe339 to Leu404 constitute a Chromo domain. The active site involves Cys417.

This sequence belongs to the class I-like SAM-binding methyltransferase superfamily. C5-methyltransferase family. As to expression, expressed in flowers. Not detected in leaves, roots, seedlings and plants prior formation of flower buds.

The protein resides in the nucleus. It carries out the reaction a 2'-deoxycytidine in DNA + S-adenosyl-L-methionine = a 5-methyl-2'-deoxycytidine in DNA + S-adenosyl-L-homocysteine + H(+). Its function is as follows. May be involved in the CpXpG methylation and in gene silencing. This is Putative DNA (cytosine-5)-methyltransferase CMT1 (CMT1) from Arabidopsis thaliana (Mouse-ear cress).